The following is a 239-amino-acid chain: tRNA (guanine-N(1)-)-methyltransferase (239 aa).

S-adenosyl-L-methionine is bound by residues Gly-113 and 133–138 (IGDYVL). The segment at 218 to 239 (ERRPDLWAARATQNPPERKTNG) is disordered.

The protein belongs to the RNA methyltransferase TrmD family. In terms of assembly, homodimer.

It is found in the cytoplasm. The enzyme catalyses guanosine(37) in tRNA + S-adenosyl-L-methionine = N(1)-methylguanosine(37) in tRNA + S-adenosyl-L-homocysteine + H(+). In terms of biological role, specifically methylates guanosine-37 in various tRNAs. In Nitrobacter winogradskyi (strain ATCC 25391 / DSM 10237 / CIP 104748 / NCIMB 11846 / Nb-255), this protein is tRNA (guanine-N(1)-)-methyltransferase.